Reading from the N-terminus, the 499-residue chain is Xylulose kinase (499 aa).

A substrate-binding site is contributed by 81 to 82; that stretch reads MH. The active-site Proton acceptor is the Asp239.

It belongs to the FGGY kinase family.

The enzyme catalyses D-xylulose + ATP = D-xylulose 5-phosphate + ADP + H(+). Functionally, catalyzes the phosphorylation of D-xylulose to D-xylulose 5-phosphate. The polypeptide is Xylulose kinase (Bacillus subtilis (strain 168)).